The sequence spans 121 residues: Apoptin (121 aa).

Disordered regions lie at residues 1–28 (MNALQEDTPPGPSTVFRPPTSSRPLETP) and 57–121 (LRSA…CIRL). Polar residues predominate over residues 58–70 (RSATADNSESTGF). Over residues 88 to 102 (RSCDPSEYRVSELKE) the composition is skewed to basic and acidic residues.

The protein belongs to the gyrovirus apoptin family.

It localises to the host nucleus. May act as transcriptional regulator. Induces apoptosis in infected cells. Element of infectious replication cycle. This Gallus gallus (Chicken) protein is Apoptin (VP3).